A 205-amino-acid polypeptide reads, in one-letter code: Dephospho-CoA kinase (205 aa).

In terms of domain architecture, DPCK spans 5 to 201 (VVGLTGGIGS…QRYLQLSGNH (197 aa)). 13-18 (GSGKTT) serves as a coordination point for ATP.

The protein belongs to the CoaE family.

Its subcellular location is the cytoplasm. The enzyme catalyses 3'-dephospho-CoA + ATP = ADP + CoA + H(+). The protein operates within cofactor biosynthesis; coenzyme A biosynthesis; CoA from (R)-pantothenate: step 5/5. Its function is as follows. Catalyzes the phosphorylation of the 3'-hydroxyl group of dephosphocoenzyme A to form coenzyme A. The protein is Dephospho-CoA kinase of Shewanella oneidensis (strain ATCC 700550 / JCM 31522 / CIP 106686 / LMG 19005 / NCIMB 14063 / MR-1).